The primary structure comprises 642 residues: Sodium- and chloride-dependent neutral and basic amino acid transporter B(0+) (642 aa).

Topologically, residues 1 to 44 (MDKLKCPSFFKCREKEKVSASSENFHVGENDENQDRGNWSKKSD) are cytoplasmic. A run of 3 helical transmembrane segments spans residues 45–65 (YLLSMIGYAVGLGNVWRFPYL), 72–92 (GAFLIPYAIMLALAGLPLFFL), and 110–130 (ILPLFQGVGITMVLISIFVTI). The Extracellular segment spans residues 131 to 234 (YYNVIIAYSL…RSSGMNETGV (104 aa)). N-linked (GlcNAc...) asparagine glycans are attached at residues Asn155, Asn163, Asn174, Asn189, Asn197, Asn202, and Asn230. 2 helical membrane-spanning segments follow: residues 235 to 255 (IVWYLALCLLLAWLIVGAALF) and 261 to 281 (SGKVVYFTALFPYVVLLILLV). N-linked (GlcNAc...) asparagine glycosylation is present at Asn302. Helical transmembrane passes span 315 to 335 (AATQIFYSLSVAWGGLVALSS), 348 to 368 (IVVCLTNCLTSVFAGFAIFSI), 399 to 419 (LAQLPGGPFWSILFFFMLLTL), 450 to 477 (ITLGCCLVLFLLGLVCVTQAGIYWVHLI), 480 to 500 (FCAGWGILIAAILELVGIIWI), 528 to 548 (CWFVITPILLIAIFIWSLVQF), and 563 to 583 (VALGWCMIVFCIIWIPIMAII). The Cytoplasmic portion of the chain corresponds to 584–642 (KIIQAKGNIFQRLISCCRPASNWGPYLEQHRGERYKDMVDPKKEADHEIPTVSGSRKPE). Positions 622-632 (VDPKKEADHEI) are enriched in basic and acidic residues. Positions 622–642 (VDPKKEADHEIPTVSGSRKPE) are disordered.

The protein belongs to the sodium:neurotransmitter symporter (SNF) (TC 2.A.22) family. SLC6A14 subfamily. In terms of tissue distribution, levels are highest in adult and fetal lung, in trachea and salivary gland. Lower levels detected in mammary gland, stomach and pituitary gland, and very low levels in colon, uterus, prostate and testis.

Its subcellular location is the membrane. The protein resides in the apical cell membrane. The catalysed reaction is glycine(out) + chloride(out) + 2 Na(+)(out) = glycine(in) + chloride(in) + 2 Na(+)(in). It catalyses the reaction L-leucine(out) + chloride(out) + 2 Na(+)(out) = L-leucine(in) + chloride(in) + 2 Na(+)(in). It carries out the reaction L-glutamine(out) + chloride(out) + 2 Na(+)(out) = L-glutamine(in) + chloride(in) + 2 Na(+)(in). The enzyme catalyses L-arginine(out) + chloride(out) + 2 Na(+)(out) = L-arginine(in) + chloride(in) + 2 Na(+)(in). The catalysed reaction is (R)-carnitine(out) + chloride(out) + 2 Na(+)(out) = (R)-carnitine(in) + chloride(in) + 2 Na(+)(in). It catalyses the reaction O-butanoyl-(R)-carnitine(out) + chloride(out) + 2 Na(+)(out) = O-butanoyl-(R)-carnitine(in) + chloride(in) + 2 Na(+)(in). It carries out the reaction O-propanoyl-(R)-carnitine(out) + chloride(out) + 2 Na(+)(out) = O-propanoyl-(R)-carnitine(in) + chloride(in) + 2 Na(+)(in). The enzyme catalyses L-isoleucine(out) + chloride(out) + 2 Na(+)(out) = L-isoleucine(in) + chloride(in) + 2 Na(+)(in). The catalysed reaction is L-methionine(out) + chloride(out) + 2 Na(+)(out) = L-methionine(in) + chloride(in) + 2 Na(+)(in). It catalyses the reaction L-valine(out) + chloride(out) + 2 Na(+)(out) = L-valine(in) + chloride(in) + 2 Na(+)(in). It carries out the reaction L-alanine(out) + chloride(out) + 2 Na(+)(out) = L-alanine(in) + chloride(in) + 2 Na(+)(in). The enzyme catalyses L-serine(out) + chloride(out) + 2 Na(+)(out) = L-serine(in) + chloride(in) + 2 Na(+)(in). The catalysed reaction is L-cysteine(out) + chloride(out) + 2 Na(+)(out) = L-cysteine(in) + chloride(in) + 2 Na(+)(in). It catalyses the reaction L-asparagine(out) + chloride(out) + 2 Na(+)(out) = L-asparagine(in) + chloride(in) + 2 Na(+)(in). It carries out the reaction L-threonine(out) + chloride(out) + 2 Na(+)(out) = L-threonine(in) + chloride(in) + 2 Na(+)(in). The enzyme catalyses L-phenylalanine(out) + chloride(out) + 2 Na(+)(out) = L-phenylalanine(in) + chloride(in) + 2 Na(+)(in). The catalysed reaction is L-tryptophan(out) + chloride(out) + 2 Na(+)(out) = L-tryptophan(in) + chloride(in) + 2 Na(+)(in). It catalyses the reaction L-tyrosine(out) + chloride(out) + 2 Na(+)(out) = L-tyrosine(in) + chloride(in) + 2 Na(+)(in). It carries out the reaction L-histidine(out) + chloride(out) + 2 Na(+)(out) = L-histidine(in) + chloride(in) + 2 Na(+)(in). The enzyme catalyses L-lysine(out) + chloride(out) + 2 Na(+)(out) = L-lysine(in) + chloride(in) + 2 Na(+)(in). The catalysed reaction is beta-alanine(out) + chloride(out) + 2 Na(+)(out) = beta-alanine(in) + chloride(in) + 2 Na(+)(in). Its function is as follows. Amino acid transporter that plays an important role in the absorption of amino acids in the intestinal tract. Mediates the uptake of a broad range of neutral and cationic amino acids (with the exception of proline) in a Na(+)/Cl(-)-dependent manner. Transports non-alpha-amino acids such as beta-alanine with low affinity, and has a higher affinity for dipolar and cationic amino acids such as leucine and lysine. Can also transport carnitine, butirylcarnitine and propionylcarnitine coupled to the transmembrane gradients of Na(+) and Cl(-). This chain is Sodium- and chloride-dependent neutral and basic amino acid transporter B(0+), found in Homo sapiens (Human).